The sequence spans 258 residues: Probable parvulin-type peptidyl-prolyl cis-trans isomerase (258 aa).

The N-terminal stretch at methionine 1–alanine 19 is a signal peptide. The region spanning lysine 127–aspartate 219 is the PpiC domain. The segment covering aspartate 158 to glycine 175 has biased composition (basic and acidic residues). The segment at aspartate 158–glycine 178 is disordered.

It belongs to the PpiC/parvulin rotamase family.

The enzyme catalyses [protein]-peptidylproline (omega=180) = [protein]-peptidylproline (omega=0). This is Probable parvulin-type peptidyl-prolyl cis-trans isomerase from Bordetella bronchiseptica (strain ATCC BAA-588 / NCTC 13252 / RB50) (Alcaligenes bronchisepticus).